Consider the following 391-residue polypeptide: Serine protease 7 (391 aa).

The first 27 residues, 1–27 (MKSTRKVVGIFLATCLLPFTVLQNVAA), serve as a signal peptide directing secretion. A propeptide spans 28–136 (QGSCRNPNQK…KCGPHSFSNK (109 aa)) (activation peptide). The region spanning 30 to 84 (SCRNPNQKQGQCLSIYDCQSLLSVIQQSYVSPEDRTFLRNSQCLDGVGRQPYVCC) is the Clip domain. Cystine bridges form between cysteine 31/cysteine 83, cysteine 41/cysteine 72, and cysteine 47/cysteine 84. A disordered region spans residues 91-121 (GSQEATSAAPPPTTTSSSSRGQDGQAGLGNL). Disulfide bonds link cysteine 128–cysteine 264, cysteine 167–cysteine 183, cysteine 211–cysteine 216, cysteine 310–cysteine 327, and cysteine 337–cysteine 366. The Peptidase S1 domain maps to 137-390 (VYNGNDTAID…YMDWIVETIR (254 aa)). Asparagine 141 carries an N-linked (GlcNAc...) asparagine glycan. Histidine 182 functions as the Charge relay system in the catalytic mechanism. Ca(2+)-binding residues include glutamate 202, aspartate 204, lysine 207, and aspartate 210. Aspartate 244 acts as the Charge relay system in catalysis. Serine 341 serves as the catalytic Charge relay system.

It belongs to the peptidase S1 family. CLIP subfamily. Interacts with Spn27A.

Its subcellular location is the secreted. Functionally, serine protease that, by cleaving and activating prophenoloxidase (PPO1) after immune challenge, plays an essential role in the melanization immune response to septic wounding. May function in diverse Hayan-dependent PPO1-activating cascades that are negatively controlled by different serpin proteins; Spn27A in the hemolymph and Spn77BA in the trachea. Important for the innate immune response to fungi. Regulation of melanization and PPO1 activation appears to be largely independent of the Toll signaling pathway. The polypeptide is Serine protease 7 (Drosophila melanogaster (Fruit fly)).